A 188-amino-acid chain; its full sequence is Probable manganese efflux pump MntP (188 aa).

A run of 5 helical transmembrane segments spans residues 3 to 23 (ITAT…ASIG), 66 to 86 (LEWN…RMII), 106 to 128 (WLLV…GLAF), 143 to 163 (ATLI…SIIG), and 168 to 188 (ILGG…HFHG).

It belongs to the MntP (TC 9.B.29) family.

It localises to the cell inner membrane. Its function is as follows. Probably functions as a manganese efflux pump. The polypeptide is Probable manganese efflux pump MntP (Escherichia coli O139:H28 (strain E24377A / ETEC)).